A 322-amino-acid polypeptide reads, in one-letter code: Sideroflexin-1 (322 aa).

Ser-2 bears the N-acetylserine mark. Topologically, residues Ser-2–Thr-102 are mitochondrial matrix. Residues Ile-103–Trp-120 traverse the membrane as a helical segment. At Gln-121–Glu-146 the chain is on the mitochondrial intermembrane side. A helical membrane pass occupies residues Leu-147 to Ala-167. At Leu-168 to Pro-174 the chain is on the mitochondrial matrix side. Residues Leu-175–Leu-195 traverse the membrane as a helical segment. The Mitochondrial intermembrane portion of the chain corresponds to Met-196–Gln-228. The helical transmembrane segment at Val-229–Asn-249 threads the bilayer. The Mitochondrial matrix portion of the chain corresponds to Thr-250–Pro-266. The chain crosses the membrane as a helical span at residues Ile-267 to Phe-287. At Pro-288–Leu-322 the chain is on the mitochondrial intermembrane side.

The protein belongs to the sideroflexin family. In terms of tissue distribution, highly expressed in tissues with high one-carbon metabolism activity, such as blood, liver and kidney.

The protein resides in the mitochondrion inner membrane. It catalyses the reaction L-serine(in) = L-serine(out). The enzyme catalyses L-alanine(in) = L-alanine(out). It carries out the reaction L-cysteine(in) = L-cysteine(out). Functionally, amino acid transporter importing serine, an essential substrate of the mitochondrial branch of the one-carbon pathway, into mitochondria. Mitochondrial serine is then converted to glycine and formate, which exits to the cytosol where it is used to generate the charged folates that serve as one-carbon donors. May also transport other amino acids including alanine and cysteine. In Homo sapiens (Human), this protein is Sideroflexin-1.